Reading from the N-terminus, the 1589-residue chain is Mediator of RNA polymerase II transcription subunit 23 (1589 aa).

Residues 1381–1499 (YVSQNEPAPP…PPTPAPMHHQ (119 aa)) are disordered. Residues 1392-1410 (TPEREKTPERKDQQKEQQE) are compositionally biased toward basic and acidic residues. Residues 1457-1470 (LHHQQQQQQHLSQM) show a composition bias toward low complexity.

This sequence belongs to the Mediator complex subunit 23 family. In terms of assembly, component of the Mediator complex.

It localises to the nucleus. In terms of biological role, component of the Mediator complex, a coactivator involved in the regulated transcription of nearly all RNA polymerase II-dependent genes. Mediator functions as a bridge to convey information from gene-specific regulatory proteins to the basal RNA polymerase II transcription machinery. Mediator is recruited to promoters by direct interactions with regulatory proteins and serves as a scaffold for the assembly of a functional preinitiation complex with RNA polymerase II and the general transcription factors. This Caenorhabditis briggsae protein is Mediator of RNA polymerase II transcription subunit 23 (sur-2).